A 334-amino-acid polypeptide reads, in one-letter code: Leucine carboxyl methyltransferase 1 (334 aa).

S-adenosyl-L-methionine-binding positions include lysine 37, arginine 73, glycine 98, aspartate 122, 171–172, and glutamate 198; that span reads DL.

The protein belongs to the methyltransferase superfamily. LCMT family.

It carries out the reaction [phosphatase 2A protein]-C-terminal L-leucine + S-adenosyl-L-methionine = [phosphatase 2A protein]-C-terminal L-leucine methyl ester + S-adenosyl-L-homocysteine. Functionally, methylates the carboxyl group of the C-terminal leucine residue of protein phosphatase 2A catalytic subunits to form alpha-leucine ester residues. The sequence is that of Leucine carboxyl methyltransferase 1 (LCMT1) from Homo sapiens (Human).